The chain runs to 126 residues: UPF0738 protein BH2850 (126 aa).

Belongs to the UPF0738 family.

The sequence is that of UPF0738 protein BH2850 from Halalkalibacterium halodurans (strain ATCC BAA-125 / DSM 18197 / FERM 7344 / JCM 9153 / C-125) (Bacillus halodurans).